The following is a 1427-amino-acid chain: Double-stranded DNA deaminase toxin A (1427 aa).

The next 2 helical transmembrane spans lie at 16–36 (ALAG…AVAF) and 43–63 (FGVA…LLSI). YD repeat units follow at residues 469–501 (RVVE…DGRT), 548–584 (YDDA…GPDG), 720–747 (NARG…GRLR), and 977–1008 (YDGA…ISRA). The tract at residues 1264–1427 (IGLNGGANVY…SPKSPTKGGC (164 aa)) is C-terminal effector domain, has cytidine deaminase activity. Residues His-1345, Cys-1373, and Cys-1376 each contribute to the Zn(2+) site. Residues 1402–1427 (KRGATGETKVFTGNSNSPKSPTKGGC) are disordered. Over residues 1412 to 1421 (FTGNSNSPKS) the composition is skewed to polar residues.

The protein belongs to the RHS/WapA nuclease family. As to quaternary structure, the toxic domain forms a 1:1 complex with the DddI immunity protein.

The protein resides in the membrane. It carries out the reaction a 2'-deoxycytidine in double-stranded DNA + H2O + H(+) = a 2'-deoxyuridine in double-stranded DNA + NH4(+). Its function is as follows. Toxic component of a toxin-immunity protein module, which functions as a cellular contact-dependent growth inhibition (CDI) system. CDI modules allow bacteria to communicate with and inhibit the growth of closely related neighboring bacteria in a contact-dependent fashion. Bacteria that have this module inhibit or kill bacteria without it, giving them a growth advantage. Probably specifically inhibited by cognate immunity protein DddI. The C-terminal 163 residue fragment has double-stranded DNA cytidine deaminase activity; it does not deaminate ssDNA, ssRNA or dsRNA. Leads to C:G to T:A conversions in deaminated DNA. Preferentially deaminates 5'-TC-3' substrates. The sequence is that of Double-stranded DNA deaminase toxin A from Burkholderia cenocepacia (strain H111).